Consider the following 390-residue polypeptide: GTPase Obg (390 aa).

The 159-residue stretch at 1–159 folds into the Obg domain; it reads MKFVDEASVK…RELRLELLLL (159 aa). Residues 160–333 enclose the OBG-type G domain; the sequence is ADVGMLGLPN…LCFKLGEFME (174 aa). GTP contacts are provided by residues 166 to 173, 191 to 195, 213 to 216, 283 to 286, and 314 to 316; these read GLPNAGKS, FTTLI, DIPG, NKVD, and SAV. The Mg(2+) site is built by S173 and T193.

The protein belongs to the TRAFAC class OBG-HflX-like GTPase superfamily. OBG GTPase family. In terms of assembly, monomer. Mg(2+) serves as cofactor.

Its subcellular location is the cytoplasm. An essential GTPase which binds GTP, GDP and possibly (p)ppGpp with moderate affinity, with high nucleotide exchange rates and a fairly low GTP hydrolysis rate. Plays a role in control of the cell cycle, stress response, ribosome biogenesis and in those bacteria that undergo differentiation, in morphogenesis control. The sequence is that of GTPase Obg from Vibrio atlanticus (strain LGP32) (Vibrio splendidus (strain Mel32)).